Reading from the N-terminus, the 227-residue chain is Deoxyribose-phosphate aldolase (227 aa).

D84 serves as the catalytic Proton donor/acceptor. The Schiff-base intermediate with acetaldehyde role is filled by K146. K188 serves as the catalytic Proton donor/acceptor.

It belongs to the DeoC/FbaB aldolase family. DeoC type 1 subfamily.

Its subcellular location is the cytoplasm. The enzyme catalyses 2-deoxy-D-ribose 5-phosphate = D-glyceraldehyde 3-phosphate + acetaldehyde. The protein operates within carbohydrate degradation; 2-deoxy-D-ribose 1-phosphate degradation; D-glyceraldehyde 3-phosphate and acetaldehyde from 2-deoxy-alpha-D-ribose 1-phosphate: step 2/2. In terms of biological role, catalyzes a reversible aldol reaction between acetaldehyde and D-glyceraldehyde 3-phosphate to generate 2-deoxy-D-ribose 5-phosphate. This is Deoxyribose-phosphate aldolase from Pyrobaculum islandicum (strain DSM 4184 / JCM 9189 / GEO3).